We begin with the raw amino-acid sequence, 85 residues long: MEKDLDYTMKFEGIPEDRMSVGDTIDFVYKALVEKGYNPINQIIGYLLSGDSSYITSHKNARAIIKKFERDEILEEVITHYLNRK.

The protein belongs to the UPF0297 family.

The chain is UPF0297 protein CD630_12830 from Clostridioides difficile (strain 630) (Peptoclostridium difficile).